The sequence spans 426 residues: Meiotically up-regulated gene 170 protein (426 aa).

This sequence belongs to the arrestin family.

Its subcellular location is the cytoplasm. It localises to the nucleus. Has a role in meiosis. This chain is Meiotically up-regulated gene 170 protein (mug170), found in Schizosaccharomyces pombe (strain 972 / ATCC 24843) (Fission yeast).